We begin with the raw amino-acid sequence, 918 residues long: uncharacterized protein (918 aa).

Disordered regions lie at residues 66-150, 226-283, 326-481, 515-548, 594-707, 737-774, and 800-918; these read AMVH…SSYG, GADG…NADF, ADGT…EFGN, ALEK…GSNL, EITH…NAVK, NHSN…SHLT, and HITH…IIQM. A compositionally biased stretch (low complexity) spans 79–89; sequence QSSGSSSNTHS. A compositionally biased stretch (basic and acidic residues) spans 103 to 127; sequence NSEKKDGYNKESKVDEANENTKIKS. Positions 270–281 are enriched in low complexity; sequence SKKAASASGSNA. 3 stretches are compositionally biased toward polar residues: residues 326–354, 363–372, and 379–404; these read ADGT…SSDL, KSHSTSNKTD, and ANQS…SSIE. A compositionally biased stretch (low complexity) spans 430–441; that stretch reads SSSHSKSASGTS. The span at 515 to 533 shows a compositional bias: basic and acidic residues; that stretch reads ALEKNHEKNSDGTFKDESK. Composition is skewed to polar residues over residues 534 to 545 and 604 to 619; these read GSNSRVNRTDGG and VAAS…TSMS. Residues 632–647 show a composition bias toward low complexity; it reads SSQAADSHDAISASSD. Over residues 648–660 the composition is skewed to basic and acidic residues; that stretch reads VDAKIVKHADRSE. Residues 661-672 are compositionally biased toward polar residues; it reads SISNDSSNQTAS. The span at 673-688 shows a compositional bias: basic and acidic residues; it reads EHNDSSKQSEHEKRQN. Positions 689-702 are enriched in polar residues; it reads ADGSFSDVSSNSAK. Basic and acidic residues-rich tracts occupy residues 738–765, 800–814, 830–846, and 883–918; these read HSND…DAKH, HITH…DAGH, EGFK…EGAQ, and LAKD…IIQM.

This is an uncharacterized protein from Caenorhabditis elegans.